A 189-amino-acid polypeptide reads, in one-letter code: Movement protein (189 aa).

This sequence belongs to the tombusvirus/aureusvirus movement protein p22 family. Interacts with host protein HFI22. Post-translationally, phosphorylated.

It localises to the host membrane. In terms of biological role, transports viral genome to neighboring plant cells directly through plasmosdesmata, without any budding. The movement protein allows efficient cell to cell propagation, by bypassing the host cell wall barrier. The chain is Movement protein from Capsicum annuum (Capsicum pepper).